Reading from the N-terminus, the 126-residue chain is MFPGGGKFNPRMMKQMQKMMKDFGMDAEDLKAVKVTIELEDTILVFEKPKVQVMDMLGNKTYSITGKAKKVAKAEEKIEDVEVKVEVTEEDIEMVSSQCGVSKEEAKKALEEANGDLAEAILKLGN.

One can recognise an NAC-A/B domain in the interval 10 to 77; the sequence is PRMMKQMQKM…AKKVAKAEEK (68 aa).

It belongs to the NAC-alpha family. In terms of assembly, homodimer. Interacts with the ribosome. Binds ribosomal RNA.

In terms of biological role, contacts the emerging nascent chain on the ribosome. The protein is Nascent polypeptide-associated complex protein of Methanococcus maripaludis (strain C5 / ATCC BAA-1333).